An 859-amino-acid chain; its full sequence is Photoactivated adenylate cyclase subunit beta-like protein ST- (859 aa).

Residues 56-149 (LRRLMYLSKS…GRMYGDWHMK (94 aa)) enclose the BLUF 1 domain. Positions 420-444 (RPPIFDDTPKSNPRPRTPGYGGRQR) are disordered. Residues 471-563 (LTTLTYISQA…RVYTSEWTLT (93 aa)) form the BLUF 2 domain. The segment at 814–859 (ARSGEQPLTEPEQAKPDFRVSPGRDRHGVSGRRSNSSQGKGSIQVG) is disordered. Residues 825–841 (EQAKPDFRVSPGRDRHG) show a composition bias toward basic and acidic residues. The segment covering 845-859 (RRSNSSQGKGSIQVG) has biased composition (polar residues).

In terms of assembly, heterotetramer of two alpha and two beta subunits.

It is found in the cell projection. The protein localises to the cilium. The protein resides in the flagellum. The sequence is that of Photoactivated adenylate cyclase subunit beta-like protein ST- from Euglena gracilis.